We begin with the raw amino-acid sequence, 67 residues long: Amphipathic peptide Tx348 (67 aa).

Positions 1-23 (MKSQAFFLLFLVVLLLATTQSEA) are cleaved as a signal peptide. F33 carries the post-translational modification Phenylalanine amide. Positions 37-67 (SMRNMDTMKYLYDPSLSAADLKTLQKLMENY) are excised as a propeptide.

Belongs to the non-disulfide-bridged peptide (NDBP) superfamily. Short antimicrobial peptide (group 4) family. Expressed by the venom gland.

It localises to the secreted. The protein localises to the target cell membrane. Functionally, amphipathic peptide that has antibacterial activities. This chain is Amphipathic peptide Tx348, found in Buthus israelis (Israeli scorpion).